A 347-amino-acid polypeptide reads, in one-letter code: D-alanine--D-alanine ligase (347 aa).

The ATP-grasp domain maps to 131–333 (KRVLESAGIA…YPELIERLVD (203 aa)). 161-216 (EEKLAYPVFTKPSNMGSSVGISKSENQEELRQALKLAFRYDSRVLVEQGVNAREIE) contributes to the ATP binding site. Mg(2+) contacts are provided by D287, E300, and N302.

This sequence belongs to the D-alanine--D-alanine ligase family. It depends on Mg(2+) as a cofactor. Mn(2+) is required as a cofactor.

It localises to the cytoplasm. It carries out the reaction 2 D-alanine + ATP = D-alanyl-D-alanine + ADP + phosphate + H(+). Its pathway is cell wall biogenesis; peptidoglycan biosynthesis. Cell wall formation. This is D-alanine--D-alanine ligase from Streptococcus pneumoniae (strain ATCC BAA-255 / R6).